A 273-amino-acid chain; its full sequence is Dermonecrotic toxin LdSicTox-alphaIB3ai (273 aa).

Residue H5 is part of the active site. Mg(2+) is bound by residues E25 and D27. Catalysis depends on H41, which acts as the Nucleophile. 2 disulfides stabilise this stretch: C45–C51 and C47–C190. Position 85 (D85) interacts with Mg(2+).

This sequence belongs to the arthropod phospholipase D family. Class II subfamily. The cofactor is Mg(2+). Expressed by the venom gland.

The protein resides in the secreted. It catalyses the reaction an N-(acyl)-sphingosylphosphocholine = an N-(acyl)-sphingosyl-1,3-cyclic phosphate + choline. It carries out the reaction an N-(acyl)-sphingosylphosphoethanolamine = an N-(acyl)-sphingosyl-1,3-cyclic phosphate + ethanolamine. The catalysed reaction is a 1-acyl-sn-glycero-3-phosphocholine = a 1-acyl-sn-glycero-2,3-cyclic phosphate + choline. The enzyme catalyses a 1-acyl-sn-glycero-3-phosphoethanolamine = a 1-acyl-sn-glycero-2,3-cyclic phosphate + ethanolamine. In terms of biological role, dermonecrotic toxins cleave the phosphodiester linkage between the phosphate and headgroup of certain phospholipids (sphingolipid and lysolipid substrates), forming an alcohol (often choline) and a cyclic phosphate. This toxin acts on sphingomyelin (SM). It may also act on ceramide phosphoethanolamine (CPE), lysophosphatidylcholine (LPC) and lysophosphatidylethanolamine (LPE), but not on lysophosphatidylserine (LPS), and lysophosphatidylglycerol (LPG). It acts by transphosphatidylation, releasing exclusively cyclic phosphate products as second products. Induces dermonecrosis, hemolysis, increased vascular permeability, edema, inflammatory response, and platelet aggregation. The protein is Dermonecrotic toxin LdSicTox-alphaIB3ai of Loxosceles deserta (Desert recluse spider).